A 223-amino-acid polypeptide reads, in one-letter code: MIF4G domain-containing protein B (223 aa).

The 198-residue stretch at 9–206 (DYKIQGFDAD…LEMIEYRAAG (198 aa)) folds into the MIF4G domain.

Belongs to the MIF4GD family. In terms of assembly, interacts with eif4g1, eif4g2 and slbp; probably tethered by SLBP to the 3'-end of mRNAs ending with the histone stem-loop, it also interacts with eif4g1 which is bound to their 5'-end.

It is found in the cytoplasm. It localises to the nucleus. In terms of biological role, functions in replication-dependent translation of histone mRNAs which differ from other eukaryotic mRNAs in that they do not end with a poly-A tail but a stem-loop. May participate in circularizing those mRNAs specifically enhancing their translation. The sequence is that of MIF4G domain-containing protein B (mif4gd-b) from Xenopus laevis (African clawed frog).